A 301-amino-acid chain; its full sequence is Probable alpha-L-glutamate ligase 1 (301 aa).

One can recognise an ATP-grasp domain in the interval 104 to 287 (LQLLSRKGIG…VTEPIVEYIE (184 aa)). Residues Lys-141, 178 to 179 (EY), Asp-187, and 211 to 213 (RSN) contribute to the ATP site. Mg(2+) is bound by residues Asp-248, Glu-260, and Asn-262. The Mn(2+) site is built by Asp-248, Glu-260, and Asn-262.

This sequence belongs to the RimK family. It depends on Mg(2+) as a cofactor. Mn(2+) is required as a cofactor.

The chain is Probable alpha-L-glutamate ligase 1 from Shewanella sp. (strain ANA-3).